A 77-amino-acid polypeptide reads, in one-letter code: Protein ImpC (77 aa).

This sequence belongs to the DinI family.

This chain is Protein ImpC (impC), found in Salmonella typhimurium.